The primary structure comprises 1024 residues: Beta-galactosidase (1024 aa).

Asn103 and Asp202 together coordinate substrate. Asp202 provides a ligand contact to Na(+). Residues Glu417, His419, and Glu462 each contribute to the Mg(2+) site. Residues Glu462 and 538–541 each bind substrate; that span reads EYAH. The active-site Proton donor is Glu462. Glu538 functions as the Nucleophile in the catalytic mechanism. A Mg(2+)-binding site is contributed by Asn598. Positions 602 and 605 each coordinate Na(+). Residues Asn605 and Trp1000 each contribute to the substrate site.

It belongs to the glycosyl hydrolase 2 family. Homotetramer. The cofactor is Mg(2+). Na(+) serves as cofactor.

It catalyses the reaction Hydrolysis of terminal non-reducing beta-D-galactose residues in beta-D-galactosides.. This chain is Beta-galactosidase, found in Escherichia coli O6:H1 (strain CFT073 / ATCC 700928 / UPEC).